Reading from the N-terminus, the 363-residue chain is Nucleoporin SEH1 (363 aa).

WD repeat units lie at residues A15–R54, C60–D101, Q108–E149, R158–E206, D223–L264, and G287–K326.

It belongs to the WD repeat SEC13 family. Component of the nuclear pore complex (NPC). Probably part of the GATOR complex.

The protein localises to the nucleus. The protein resides in the nuclear pore complex. Its subcellular location is the lysosome membrane. It is found in the nucleus envelope. Functionally, probable component of the nuclear pore complex (NPC) which is involved in the trafficking of macromolecules between the cytoplasm and nucleus. In terms of biological role, as a component of the GATOR complex may function in the amino acid-sensing branch of the TORC1 signaling pathway. The sequence is that of Nucleoporin SEH1 from Caenorhabditis elegans.